The following is a 613-amino-acid chain: DNA mismatch repair protein MutL (613 aa).

This sequence belongs to the DNA mismatch repair MutL/HexB family.

Functionally, this protein is involved in the repair of mismatches in DNA. It is required for dam-dependent methyl-directed DNA mismatch repair. May act as a 'molecular matchmaker', a protein that promotes the formation of a stable complex between two or more DNA-binding proteins in an ATP-dependent manner without itself being part of a final effector complex. The polypeptide is DNA mismatch repair protein MutL (Janthinobacterium sp. (strain Marseille) (Minibacterium massiliensis)).